A 99-amino-acid polypeptide reads, in one-letter code: Large ribosomal subunit protein P1 (99 aa).

In terms of assembly, part of the 50S ribosomal subunit. Homodimer, it forms part of the ribosomal stalk which helps the ribosome interact with GTP-bound translation factors. Forms both a pentameric uL10/P0(P1)2(P1)2 and heptameric uL10/P0(P1)2(P1)2(P1)2 complex, where uL10/P0 forms an elongated spine to which the P1 dimers bind in a sequential fashion. The proportion of heptameric complexes increases during cell growth.

Its function is as follows. Forms part of the ribosomal stalk, playing a central role in the interaction of the ribosome with GTP-bound translation factors. The protein is Large ribosomal subunit protein P1 of Methanococcus vannielii.